Reading from the N-terminus, the 330-residue chain is Phosphate acyltransferase (330 aa).

The protein belongs to the PlsX family. As to quaternary structure, homodimer. Probably interacts with PlsY.

Its subcellular location is the cytoplasm. It carries out the reaction a fatty acyl-[ACP] + phosphate = an acyl phosphate + holo-[ACP]. The protein operates within lipid metabolism; phospholipid metabolism. Its function is as follows. Catalyzes the reversible formation of acyl-phosphate (acyl-PO(4)) from acyl-[acyl-carrier-protein] (acyl-ACP). This enzyme utilizes acyl-ACP as fatty acyl donor, but not acyl-CoA. This is Phosphate acyltransferase from Bacillus cereus (strain ATCC 14579 / DSM 31 / CCUG 7414 / JCM 2152 / NBRC 15305 / NCIMB 9373 / NCTC 2599 / NRRL B-3711).